An 810-amino-acid chain; its full sequence is Probable inorganic carbon transporter subunit DabA (810 aa).

Zn(2+) is bound by residues C347, D349, H509, and C524.

It belongs to the inorganic carbon transporter (TC 9.A.2) DabA family. As to quaternary structure, forms a complex with DabB. It depends on Zn(2+) as a cofactor.

The protein localises to the cell inner membrane. In terms of biological role, part of an energy-coupled inorganic carbon pump. The protein is Probable inorganic carbon transporter subunit DabA of Marinomonas sp. (strain MWYL1).